A 492-amino-acid polypeptide reads, in one-letter code: Glycosyltransferase alg8 (492 aa).

4 helical membrane-spanning segments follow: residues 13–32, 47–69, 379–401, and 421–443; these read GWLL…PPQV, IGVW…LYVV, LTVA…LLWV, and PAYP…HVFF.

It belongs to the glycosyltransferase 2 family.

The protein localises to the cell membrane. Its pathway is glycan biosynthesis; alginate biosynthesis. In terms of biological role, possibly a processive enzyme that polymerizes GDP-mannuronic acid. This is Glycosyltransferase alg8 (alg8) from Azotobacter vinelandii.